A 325-amino-acid chain; its full sequence is D site-binding protein (325 aa).

3 disordered regions span residues 1–98 (MARP…AGPS), 124–203 (LEHG…EVLM), and 230–256 (FSEE…QKDE). The segment covering 17 to 28 (GPAGAPPGGGAL) has biased composition (gly residues). Residues 71–80 (AGPADAPSGA) show a composition bias toward low complexity. At S86 the chain carries Phosphoserine. Positions 88-98 (RGRSGPVAGPS) are enriched in low complexity. Residues 129 to 153 (PPSPPPPGGLSPAPSPARTPAPSPG) are compositionally biased toward pro residues. The span at 154–171 (PGSCSSSSPRSSPGHAPA) shows a compositional bias: low complexity. One can recognise a bZIP domain in the interval 255-318 (DEKYWSRRYK…SHYRAVLSRY (64 aa)). Positions 257–279 (KYWSRRYKNNEAAKRSRDARRLK) are basic motif. Residues 283 to 297 (ISVRAAFLEKENALL) are leucine-zipper.

This sequence belongs to the bZIP family. PAR subfamily. As to quaternary structure, binds DNA as a homodimer or a heterodimer. Can form a heterodimer with TEF. As to expression, expressed in the suprachiasmatic nuclei (SCN) and in most peripheral tissues, with a strong circadian rhythmicity.

The protein resides in the nucleus. In terms of biological role, this transcriptional activator recognizes and binds to the sequence 5'-RTTAYGTAAY-3' found in the promoter of genes such as albumin, CYP2A4 and CYP2A5. It is not essential for circadian rhythm generation, but modulates important clock output genes. May be a direct target for regulation by the circadian pacemaker component clock. May affect circadian period and sleep regulation. The sequence is that of D site-binding protein (Dbp) from Mus musculus (Mouse).